We begin with the raw amino-acid sequence, 106 residues long: Large ribosomal subunit protein bL21 (106 aa).

This sequence belongs to the bacterial ribosomal protein bL21 family. Part of the 50S ribosomal subunit. Contacts protein L20.

Its function is as follows. This protein binds to 23S rRNA in the presence of protein L20. The protein is Large ribosomal subunit protein bL21 of Chlamydia abortus (strain DSM 27085 / S26/3) (Chlamydophila abortus).